The chain runs to 154 residues: Large ribosomal subunit protein uL13 (154 aa).

This sequence belongs to the universal ribosomal protein uL13 family. Part of the 50S ribosomal subunit.

In terms of biological role, this protein is one of the early assembly proteins of the 50S ribosomal subunit, although it is not seen to bind rRNA by itself. It is important during the early stages of 50S assembly. The sequence is that of Large ribosomal subunit protein uL13 from Rhizobium rhizogenes (strain K84 / ATCC BAA-868) (Agrobacterium radiobacter).